The primary structure comprises 584 residues: Adenine deaminase (584 aa).

The protein belongs to the metallo-dependent hydrolases superfamily. Adenine deaminase family. Mn(2+) is required as a cofactor.

The enzyme catalyses adenine + H2O + H(+) = hypoxanthine + NH4(+). The sequence is that of Adenine deaminase from Methanococcoides burtonii (strain DSM 6242 / NBRC 107633 / OCM 468 / ACE-M).